A 3462-amino-acid chain; its full sequence is Extracellular matrix-binding protein EbhA (3462 aa).

The segment covering 1–19 has biased composition (polar residues); that stretch reads MVQQSTTVAEAQGNEQKAN. Residues 1 to 21 are disordered; that stretch reads MVQQSTTVAEAQGNEQKANNV. FIVAR domains lie at 24-82, 150-208, 276-334, 402-460, 528-586, 654-712, 780-838, 906-964, 1032-1093, 1158-1216, 1284-1342, 1410-1467, 1535-1593, 1661-1719, 1787-1845, 1913-1971, 2039-2093, 2161-2220, and 2415-2471; these read AMDK…INQA, AMGN…VEQA, AMTQ…ITAA, AMTQ…IQQA, AMTN…VEQA, AMTQ…VAQA, AMGT…VTQA, AMSN…ITRA, AMDQ…ITNE, AMEL…VNGA, AMHG…INQA, LMDA…VSSA, AMEA…VEQL, AMQA…VEQL, AMET…VDQV, SMDQ…VDQA, AMDQ…VIKL, and AMET…INGA. The chain crosses the membrane as a helical span at residues 3267 to 3289; that stretch reads VIKNAIGVVGISGLLASFWFFIA. The interval 3365–3462 is disordered; that stretch reads RRKEDEEDVE…KKKKAKKNKK (98 aa). Basic and acidic residues-rich tracts occupy residues 3380 to 3390 and 3429 to 3439; these read TDEKVLKDNEH and QKDNQSKDKKS. The span at 3444–3462 shows a compositional bias: basic residues; sequence TSKKVAAKKKKKKAKKNKK.

The protein resides in the cell membrane. This is Extracellular matrix-binding protein EbhA (ebhA) from Staphylococcus aureus (strain Newman).